A 371-amino-acid polypeptide reads, in one-letter code: Anhydro-N-acetylmuramic acid kinase (371 aa).

12–20 (GTVLDGNID) serves as a coordination point for ATP.

The protein belongs to the anhydro-N-acetylmuramic acid kinase family.

It catalyses the reaction 1,6-anhydro-N-acetyl-beta-muramate + ATP + H2O = N-acetyl-D-muramate 6-phosphate + ADP + H(+). The protein operates within amino-sugar metabolism; 1,6-anhydro-N-acetylmuramate degradation. It functions in the pathway cell wall biogenesis; peptidoglycan recycling. In terms of biological role, catalyzes the specific phosphorylation of 1,6-anhydro-N-acetylmuramic acid (anhMurNAc) with the simultaneous cleavage of the 1,6-anhydro ring, generating MurNAc-6-P. Is required for the utilization of anhMurNAc either imported from the medium or derived from its own cell wall murein, and thus plays a role in cell wall recycling. The protein is Anhydro-N-acetylmuramic acid kinase of Mesorhizobium japonicum (strain LMG 29417 / CECT 9101 / MAFF 303099) (Mesorhizobium loti (strain MAFF 303099)).